Reading from the N-terminus, the 502-residue chain is Glycerol kinase (502 aa).

Residue Thr-14 coordinates ADP. Residues Thr-14, Thr-15, and Ser-16 each coordinate ATP. Thr-14 is a sn-glycerol 3-phosphate binding site. Arg-18 contributes to the ADP binding site. Arg-84, Glu-85, and Tyr-136 together coordinate sn-glycerol 3-phosphate. Residues Arg-84, Glu-85, and Tyr-136 each contribute to the glycerol site. His-232 is modified (phosphohistidine; by HPr). Residue Asp-246 coordinates sn-glycerol 3-phosphate. Residues Asp-246 and Gln-247 each contribute to the glycerol site. The ADP site is built by Thr-268 and Gly-311. Thr-268, Gly-311, Gln-315, and Gly-412 together coordinate ATP. Gly-412 and Asn-416 together coordinate ADP.

It belongs to the FGGY kinase family. Homotetramer and homodimer (in equilibrium). Post-translationally, the phosphoenolpyruvate-dependent sugar phosphotransferase system (PTS), including enzyme I, and histidine-containing protein (HPr) are required for the phosphorylation, which leads to the activation of the enzyme.

It carries out the reaction glycerol + ATP = sn-glycerol 3-phosphate + ADP + H(+). Its pathway is polyol metabolism; glycerol degradation via glycerol kinase pathway; sn-glycerol 3-phosphate from glycerol: step 1/1. Activated by phosphorylation and inhibited by fructose 1,6-bisphosphate (FBP). In terms of biological role, key enzyme in the regulation of glycerol uptake and metabolism. Catalyzes the phosphorylation of glycerol to yield sn-glycerol 3-phosphate. The chain is Glycerol kinase from Streptococcus pneumoniae serotype 2 (strain D39 / NCTC 7466).